The following is a 205-amino-acid chain: MSTATTTSTPAQNVDLSKHPSGIIPTLQNIVSTVNMATELDLKAIALGARNAEYNPKRFAAVIMRIREPKTTALIFKSGKMVCTGAKSEDASRFAARKYARIIQKLDFPARFTDFKIQNIVGSCDVKFPIKLELLHNAHTSFTNYEPEIFPGLIYKMIQPKVVLLIFVSGKIVLTGAKVREEIYEAFENIYPVLSAFKKVNAITQ.

Tandem repeats lie at residues 27–103 and 117–194.

The protein belongs to the TBP family. Belongs to the TFIID complex together with the TBP-associated factors (TAFs). Binds DNA as monomer.

It localises to the nucleus. Its function is as follows. General transcription factor that functions at the core of the DNA-binding multiprotein factor TFIID. Binding of TFIID to the TATA box is the initial transcriptional step of the pre-initiation complex (PIC), playing a role in the activation of eukaryotic genes transcribed by RNA polymerase II. The protein is TATA-box-binding protein (tbpA) of Dictyostelium discoideum (Social amoeba).